Here is a 140-residue protein sequence, read N- to C-terminus: Nucleoside diphosphate kinase (140 aa).

Residues lysine 11, phenylalanine 59, arginine 87, threonine 93, arginine 104, and asparagine 114 each coordinate ATP. Residue histidine 117 is the Pros-phosphohistidine intermediate of the active site.

This sequence belongs to the NDK family. As to quaternary structure, homotetramer. The cofactor is Mg(2+).

It is found in the cytoplasm. It carries out the reaction a 2'-deoxyribonucleoside 5'-diphosphate + ATP = a 2'-deoxyribonucleoside 5'-triphosphate + ADP. The catalysed reaction is a ribonucleoside 5'-diphosphate + ATP = a ribonucleoside 5'-triphosphate + ADP. Functionally, major role in the synthesis of nucleoside triphosphates other than ATP. The ATP gamma phosphate is transferred to the NDP beta phosphate via a ping-pong mechanism, using a phosphorylated active-site intermediate. This chain is Nucleoside diphosphate kinase, found in Rhodopseudomonas palustris (strain HaA2).